The chain runs to 316 residues: Glutathione synthetase (316 aa).

The ATP-grasp domain maps to 125-310 (KLFTAWFSDL…ITGMLMDAIE (186 aa)). ATP is bound at residue 151–207 (WEKHSDIILKPLDGMGGASIFRVKEGDPNLGVIAETLTEHGTRYCMAQNYLPAIKDG). The Mg(2+) site is built by Glu-281 and Asn-283.

It belongs to the prokaryotic GSH synthase family. Homotetramer. The cofactor is Mg(2+). Mn(2+) serves as cofactor.

It catalyses the reaction gamma-L-glutamyl-L-cysteine + glycine + ATP = glutathione + ADP + phosphate + H(+). It participates in sulfur metabolism; glutathione biosynthesis; glutathione from L-cysteine and L-glutamate: step 2/2. Its activity is regulated as follows. Inhibited by 7,8-dihydrofolate, methotrexate and trimethoprim. This chain is Glutathione synthetase (gshB), found in Escherichia coli (strain K12).